The following is a 347-amino-acid chain: tRNA N6-adenosine threonylcarbamoyltransferase (347 aa).

2 residues coordinate Fe cation: H113 and H117. Substrate-binding positions include 136-140 (IVSGG), D170, G183, D187, and N282. D310 is a Fe cation binding site.

Belongs to the KAE1 / TsaD family. Fe(2+) serves as cofactor.

The protein localises to the cytoplasm. The enzyme catalyses L-threonylcarbamoyladenylate + adenosine(37) in tRNA = N(6)-L-threonylcarbamoyladenosine(37) in tRNA + AMP + H(+). In terms of biological role, required for the formation of a threonylcarbamoyl group on adenosine at position 37 (t(6)A37) in tRNAs that read codons beginning with adenine. Is involved in the transfer of the threonylcarbamoyl moiety of threonylcarbamoyl-AMP (TC-AMP) to the N6 group of A37, together with TsaE and TsaB. TsaD likely plays a direct catalytic role in this reaction. This is tRNA N6-adenosine threonylcarbamoyltransferase from Bifidobacterium longum (strain NCC 2705).